The sequence spans 64 residues: uncharacterized protein (64 aa).

Helical transmembrane passes span 4 to 24 and 35 to 55; these read IYQY…WLAY and MYLN…TFGM.

Its subcellular location is the cell membrane. This is an uncharacterized protein from Bacillus subtilis (strain 168).